Reading from the N-terminus, the 364-residue chain is Fructose-bisphosphate aldolase B (364 aa).

Residue alanine 2 is modified to N-acetylalanine. An N6-succinyllysine modification is found at lysine 13. Serine 36 carries the post-translational modification Phosphoserine. Phosphothreonine is present on threonine 39. Residue arginine 43 coordinates beta-D-fructose 1,6-bisphosphate. The residue at position 89 (serine 89) is a Phosphoserine. Position 119 is a phosphothreonine (threonine 119). At lysine 121 the chain carries N6-succinyllysine. Serine 132 is subject to Phosphoserine. The active-site Proton acceptor is the glutamate 188. The Schiff-base intermediate with dihydroxyacetone-P role is filled by lysine 230. Phosphoserine is present on residues serine 272, serine 276, serine 299, and serine 301. Residue 272-274 (SGG) participates in beta-D-fructose 1,6-bisphosphate binding. Arginine 304 lines the beta-D-fructose 1,6-bisphosphate pocket. Serine 309 is modified (phosphoserine). Lysine 317 bears the N6-succinyllysine mark.

Belongs to the class I fructose-bisphosphate aldolase family. As to quaternary structure, homotetramer. Interacts with BBS1, BBS2, BBS4 and BBS7. Forms a ternary complex with G6PD and TP53; this interaction is direct.

It localises to the cytoplasm. The protein localises to the cytosol. The protein resides in the cytoskeleton. It is found in the microtubule organizing center. Its subcellular location is the centrosome. It localises to the centriolar satellite. The enzyme catalyses beta-D-fructose 1,6-bisphosphate = D-glyceraldehyde 3-phosphate + dihydroxyacetone phosphate. The catalysed reaction is beta-D-fructose 1-phosphate = D-glyceraldehyde + dihydroxyacetone phosphate. It participates in carbohydrate degradation; glycolysis; D-glyceraldehyde 3-phosphate and glycerone phosphate from D-glucose: step 4/4. The protein operates within carbohydrate biosynthesis; gluconeogenesis. It functions in the pathway carbohydrate metabolism; fructose metabolism. Its function is as follows. Catalyzes the aldol cleavage of fructose 1,6-biphosphate to form two triosephosphates dihydroxyacetone phosphate and D-glyceraldehyde 3-phosphate in glycolysis as well as the reverse stereospecific aldol addition reaction in gluconeogenesis. In fructolysis, metabolizes fructose 1-phosphate derived from the phosphorylation of dietary fructose by fructokinase into dihydroxyacetone phosphate and D-glyceraldehyde. Acts as an adapter independently of its enzymatic activity, exerts a tumor suppressor role by stabilizing the ternary complex with G6PD and TP53 to inhibit G6PD activity and keep oxidative pentose phosphate metabolism in check. The sequence is that of Fructose-bisphosphate aldolase B from Homo sapiens (Human).